The following is a 59-amino-acid chain: Putative zinc finger protein ORF59a (59 aa).

The segment at 11-33 (YQCLRCGLTFRTKKQLIRHLVNT) adopts a C2H2-type; degenerate zinc-finger fold.

This Acidianus hospitalis (AFV-1) protein is Putative zinc finger protein ORF59a.